Reading from the N-terminus, the 551-residue chain is Putative transport protein CGSHiGG_02670 (551 aa).

Transmembrane regions (helical) follow at residues 4-24 (IAIT…IGHW), 28-48 (GVGL…HFTN), 65-85 (FGLI…FFSS), 95-115 (AFAI…HKIA), and 157-177 (VSYA…MWLI). RCK C-terminal domains lie at 191-275 (RFNA…IIGH) and 277-360 (VDAP…VIGN). 6 consecutive transmembrane segments (helical) span residues 370–390 (MLPV…PFYI), 402–424 (AGGP…LYWF), 438–458 (IVLF…DTLV), 463–483 (LEWM…VGTI), 492–512 (YLTI…LAFA), and 529–549 (VYPL…VLLW).

The protein belongs to the AAE transporter (TC 2.A.81) family. YidE subfamily.

Its subcellular location is the cell membrane. The chain is Putative transport protein CGSHiGG_02670 from Haemophilus influenzae (strain PittGG).